Consider the following 427-residue polypeptide: Enolase (427 aa).

Position 163 (glutamine 163) interacts with (2R)-2-phosphoglycerate. The active-site Proton donor is glutamate 205. Residues aspartate 242, glutamate 285, and aspartate 312 each coordinate Mg(2+). Positions 337, 366, 367, and 388 each coordinate (2R)-2-phosphoglycerate. Residue lysine 337 is the Proton acceptor of the active site.

This sequence belongs to the enolase family. It depends on Mg(2+) as a cofactor.

It is found in the cytoplasm. Its subcellular location is the secreted. The protein localises to the cell surface. The enzyme catalyses (2R)-2-phosphoglycerate = phosphoenolpyruvate + H2O. The protein operates within carbohydrate degradation; glycolysis; pyruvate from D-glyceraldehyde 3-phosphate: step 4/5. In terms of biological role, catalyzes the reversible conversion of 2-phosphoglycerate (2-PG) into phosphoenolpyruvate (PEP). It is essential for the degradation of carbohydrates via glycolysis. The sequence is that of Enolase from Xanthobacter autotrophicus (strain ATCC BAA-1158 / Py2).